The primary structure comprises 714 residues: Rho-GTPase-activating protein RGD2 (714 aa).

Residues 2–441 (LSFCDYFWSE…LENDIDPTAD (440 aa)) form the F-BAR domain. The DEP domain maps to 218 to 298 (PKTDYKLPLI…WKNTAYMFAN (81 aa)). Residues 475–704 (VDLETRCRLD…DLLTHKKQIF (230 aa)) form the Rho-GAP domain.

In terms of assembly, interacts with CDC42 and RHO5.

Its function is as follows. Acts in signal transduction. Activates CDC42 and RHO5. In Saccharomyces cerevisiae (strain ATCC 204508 / S288c) (Baker's yeast), this protein is Rho-GTPase-activating protein RGD2 (RGD2).